A 635-amino-acid polypeptide reads, in one-letter code: Probable extracellular metalloproteinase 1 (635 aa).

The signal sequence occupies residues 1-19 (MHGLLLAAGLLSLPLHVLA). Positions 20 to 246 (HPQPSTSTSL…VHNVVDYVAH (227 aa)) are excised as a propeptide. Asn-287 carries N-linked (GlcNAc...) asparagine glycosylation. His-430 is a binding site for Zn(2+). Glu-431 is a catalytic residue. Residue His-434 coordinates Zn(2+). 3 N-linked (GlcNAc...) asparagine glycosylation sites follow: Asn-475, Asn-594, and Asn-623.

The protein belongs to the peptidase M36 family. Requires Zn(2+) as cofactor.

The protein localises to the secreted. Functionally, secreted metalloproteinase probably acting as a virulence factor. The protein is Probable extracellular metalloproteinase 1 (MEP1) of Arthroderma benhamiae (strain ATCC MYA-4681 / CBS 112371) (Trichophyton mentagrophytes).